A 257-amino-acid polypeptide reads, in one-letter code: Pyridoxine 5'-phosphate synthase (257 aa).

N12 contributes to the 3-amino-2-oxopropyl phosphate binding site. 14 to 15 (DH) lines the 1-deoxy-D-xylulose 5-phosphate pocket. Residue R23 coordinates 3-amino-2-oxopropyl phosphate. H48 functions as the Proton acceptor in the catalytic mechanism. 1-deoxy-D-xylulose 5-phosphate-binding residues include R50 and H55. E75 (proton acceptor) is an active-site residue. A 1-deoxy-D-xylulose 5-phosphate-binding site is contributed by T105. The Proton donor role is filled by H199. 3-amino-2-oxopropyl phosphate contacts are provided by residues G200 and 221–222 (GH).

Belongs to the PNP synthase family. Homooctamer; tetramer of dimers.

It is found in the cytoplasm. The catalysed reaction is 3-amino-2-oxopropyl phosphate + 1-deoxy-D-xylulose 5-phosphate = pyridoxine 5'-phosphate + phosphate + 2 H2O + H(+). Its pathway is cofactor biosynthesis; pyridoxine 5'-phosphate biosynthesis; pyridoxine 5'-phosphate from D-erythrose 4-phosphate: step 5/5. Functionally, catalyzes the complicated ring closure reaction between the two acyclic compounds 1-deoxy-D-xylulose-5-phosphate (DXP) and 3-amino-2-oxopropyl phosphate (1-amino-acetone-3-phosphate or AAP) to form pyridoxine 5'-phosphate (PNP) and inorganic phosphate. This chain is Pyridoxine 5'-phosphate synthase, found in Xanthobacter autotrophicus (strain ATCC BAA-1158 / Py2).